A 455-amino-acid polypeptide reads, in one-letter code: Phosphoglucosamine mutase (455 aa).

Serine 102 (phosphoserine intermediate) is an active-site residue. Residues serine 102, aspartate 241, aspartate 243, and aspartate 245 each contribute to the Mg(2+) site. Serine 102 carries the phosphoserine modification.

The protein belongs to the phosphohexose mutase family. Mg(2+) serves as cofactor. In terms of processing, activated by phosphorylation.

The catalysed reaction is alpha-D-glucosamine 1-phosphate = D-glucosamine 6-phosphate. Functionally, catalyzes the conversion of glucosamine-6-phosphate to glucosamine-1-phosphate. The protein is Phosphoglucosamine mutase of Legionella pneumophila (strain Lens).